A 177-amino-acid polypeptide reads, in one-letter code: MSRVAKAPVAIPAGVEVKLNGQEITIKGAKGELSRVFHKGVVIAQEDNQLTFGPREGVANAWAQAGTARALVKNMVVGVTEGFTKKLVLKGVGYRAAMKGNAVGLTLGFSHPVEHELPEGIKAECPSQTEIVLTGCDKQLVGQVAADIRSYRAPEPYKGKGIRYADENVRSKEAKKK.

Belongs to the universal ribosomal protein uL6 family. In terms of assembly, part of the 50S ribosomal subunit.

This protein binds to the 23S rRNA, and is important in its secondary structure. It is located near the subunit interface in the base of the L7/L12 stalk, and near the tRNA binding site of the peptidyltransferase center. This Vibrio cholerae serotype O1 (strain ATCC 39541 / Classical Ogawa 395 / O395) protein is Large ribosomal subunit protein uL6.